The chain runs to 204 residues: Large ribosomal subunit protein eL15 (204 aa).

It belongs to the eukaryotic ribosomal protein eL15 family. Component of the large ribosomal subunit.

It is found in the cytoplasm. Its function is as follows. Component of the large ribosomal subunit. The ribosome is a large ribonucleoprotein complex responsible for the synthesis of proteins in the cell. This chain is Large ribosomal subunit protein eL15 (rpl15), found in Mylopharyngodon piceus (Black carp).